The chain runs to 227 residues: ATP phosphoribosyltransferase (227 aa).

It belongs to the ATP phosphoribosyltransferase family. Short subfamily. As to quaternary structure, heteromultimer composed of HisG and HisZ subunits.

Its subcellular location is the cytoplasm. It carries out the reaction 1-(5-phospho-beta-D-ribosyl)-ATP + diphosphate = 5-phospho-alpha-D-ribose 1-diphosphate + ATP. Its pathway is amino-acid biosynthesis; L-histidine biosynthesis; L-histidine from 5-phospho-alpha-D-ribose 1-diphosphate: step 1/9. Catalyzes the condensation of ATP and 5-phosphoribose 1-diphosphate to form N'-(5'-phosphoribosyl)-ATP (PR-ATP). Has a crucial role in the pathway because the rate of histidine biosynthesis seems to be controlled primarily by regulation of HisG enzymatic activity. The protein is ATP phosphoribosyltransferase of Rhodospirillum rubrum (strain ATCC 11170 / ATH 1.1.1 / DSM 467 / LMG 4362 / NCIMB 8255 / S1).